A 363-amino-acid chain; its full sequence is 3-dehydroquinate synthase (363 aa).

Residues 75–80, 109–113, 133–134, Lys146, Lys155, and 173–176 contribute to the NAD(+) site; these read DAEEGK, GAVTD, TS, and TLDT. The Zn(2+) site is built by Glu188, His251, and His267.

Belongs to the sugar phosphate cyclases superfamily. Dehydroquinate synthase family. Co(2+) is required as a cofactor. The cofactor is Zn(2+). Requires NAD(+) as cofactor.

The protein localises to the cytoplasm. It catalyses the reaction 7-phospho-2-dehydro-3-deoxy-D-arabino-heptonate = 3-dehydroquinate + phosphate. It participates in metabolic intermediate biosynthesis; chorismate biosynthesis; chorismate from D-erythrose 4-phosphate and phosphoenolpyruvate: step 2/7. Catalyzes the conversion of 3-deoxy-D-arabino-heptulosonate 7-phosphate (DAHP) to dehydroquinate (DHQ). This chain is 3-dehydroquinate synthase, found in Pseudarthrobacter chlorophenolicus (strain ATCC 700700 / DSM 12829 / CIP 107037 / JCM 12360 / KCTC 9906 / NCIMB 13794 / A6) (Arthrobacter chlorophenolicus).